The sequence spans 489 residues: Argininosuccinate lyase (489 aa).

Positions 462–489 are disordered; that stretch reads QARYQQTEPAEEPPLPPSSPGSGLPLES.

The protein belongs to the lyase 1 family. Argininosuccinate lyase subfamily.

Its subcellular location is the cytoplasm. The enzyme catalyses 2-(N(omega)-L-arginino)succinate = fumarate + L-arginine. It participates in amino-acid biosynthesis; L-arginine biosynthesis; L-arginine from L-ornithine and carbamoyl phosphate: step 3/3. The polypeptide is Argininosuccinate lyase (Synechococcus sp. (strain JA-3-3Ab) (Cyanobacteria bacterium Yellowstone A-Prime)).